Consider the following 1077-residue polypeptide: TSC22 domain family protein 1 (1077 aa).

The interval Met1–Leu98 is required for interaction with TGFBR1 and promotion of TGF-beta signaling. Disordered stretches follow at residues Met22 to Gln112, Ile125 to Ser283, Gln458 to Ser492, Ser842 to Val874, and Gln909 to Ser947. Residues Phe58–Ala70 are compositionally biased toward pro residues. Residues Ser84–Gln96 show a composition bias toward low complexity. Acidic residues predominate over residues Glu133–Asp142. Positions His216–Ser240 are enriched in basic residues. Ser263 carries the post-translational modification Phosphoserine. A compositionally biased stretch (low complexity) spans Thr471–Ser489. Residues Val852–Val874 show a composition bias toward polar residues. Residues Met933–Ser947 are compositionally biased toward low complexity. The interval Leu1010–Leu1031 is leucine-zipper. The segment at Gln1042–Ala1077 is disordered. Positions Gln1048–Ala1077 are enriched in low complexity.

The protein belongs to the TSC-22/Dip/Bun family. Forms homodimers. Forms heterodimers. Component of a complex composed of TSC22D1 (via N-terminus), TGFBR1 and TGFBR2; the interaction between TSC22D1 and TGFBR1 is inhibited by SMAD7 and promoted by TGFB1. Interacts with SMAD7; the interaction requires TGF-beta and the interaction is inhibited by TGFBR1. Interacts with TPT1/fortilin; interaction results in the destabilization of TSC22D1 protein and prevents TSC22D1-mediated apoptosis. Interacts with SMAD4 (via N-terminus). Interacts with ACVRL1/ALK1, ACVR1/ALK2, BMPR1A/ALK3, ACVR1B/ALK4, BMPR1B/ALK6, ACVR2A/ACTRII, and BMPR2. Interacts with SMAD6. Interacts with TFE3; the interaction is enhanced in the presence of TGF-beta. As to quaternary structure, forms a heterodimer with TSC22D4/THG1. In terms of assembly, forms a heterodimer with TSC22D4/THG1. Interacts with histone H1-2. Interacts with GNL3. As to expression, expressed in bone marrow cells (at protein level). Expressed in T-cells. Expressed in the brain. In terms of tissue distribution, expressed in the myoepithelial cells of the mammary gland ducts and alveoli, expression is consistent throughout pregnancy, lactation and involution (at protein level). Expressed in the cortex, medulla and papilla of the kidney. Expressed in the myoepithelial cells of the mammary gland, expression significantly increases in the secretory luminal epithelium of the mammary gland at the initiation of involution, with levels decreasing from day 3 of involution onwards (at protein level). Expressed in the cortex, medulla and papilla of the kidney.

It is found in the cytoplasm. The protein resides in the nucleus. The protein localises to the cell membrane. It localises to the mitochondrion. In terms of biological role, transcriptional repressor. Acts on the C-type natriuretic peptide (CNP) promoter. Acts to promote CASP3-mediated apoptosis. Positively regulates TGF-beta signaling by interacting with SMAD7 which inhibits binding of SMAD7 to TGFBR1, preventing recruitment of SMURF ubiquitin ligases to TGFBR1 and inhibiting SMURF-mediated ubiquitination and degradation of TGFBR1. Contributes to enhancement of TGF-beta signaling by binding to and modulating the transcription activator activity of SMAD4. Promotes TGF-beta-induced transcription of COL1A2; via its interaction with TFE3 at E-boxes in the gene proximal promoter. Plays a role in the repression of hematopoietic precursor cell growth. Promotes IL2 deprivation-induced apoptosis in T-lymphocytes, via repression of TSC22D3/GILZ transcription and activation of the caspase cascade. May act to negatively regulate TGFB3 signaling and thereby inhibit cell death in mammary gland cells. Its function is as follows. Positively regulates cell death in response to TGFB3 during mammary gland involution. This Mus musculus (Mouse) protein is TSC22 domain family protein 1.